The primary structure comprises 157 residues: MSRRHRAVKRQVEPDIRYKSPLVAHLVNVIMKSGKKNLAQRIVYGAFEKVSEKLEKGDPVDLLLGALENARPRLEVKSRRVGGATYQVPIEISFERQESLALRWIVDAASGRKGIPMKEALAAEIIDAYNNTGNVVKKKEDTHKMAQANRAFAHLRW.

It belongs to the universal ribosomal protein uS7 family. Part of the 30S ribosomal subunit. Contacts proteins S9 and S11.

In terms of biological role, one of the primary rRNA binding proteins, it binds directly to 16S rRNA where it nucleates assembly of the head domain of the 30S subunit. Is located at the subunit interface close to the decoding center, probably blocks exit of the E-site tRNA. The polypeptide is Small ribosomal subunit protein uS7 (Opitutus terrae (strain DSM 11246 / JCM 15787 / PB90-1)).